Reading from the N-terminus, the 231-residue chain is MKKTLLASSLAVGLGIVAGNAGHEAHASEADLNKASLAQMAQSNDQTLNQKPIEAGAYNYTFDYEGFTYHFESDGTHFAWNYHATGTNGADMSAQAPATNNVAPSAVQANQVQSQEVEAPQNAQTQQPQASTSNNSQVTATPTESKSSEGSSVNVNAHLKQIAQRESGGNIHAVNPTSGAAGKYQFLQSTWDSVAPAKYKGVSPANAPESVQDAAAVKLYNTGGAGHWVTA.

Residues 1 to 27 (MKKTLLASSLAVGLGIVAGNAGHEAHA) form the signal peptide. Residues 106-116 (AVQANQVQSQE) are compositionally biased toward polar residues. The interval 106-153 (AVQANQVQSQEVEAPQNAQTQQPQASTSNNSQVTATPTESKSSEGSSV) is disordered. The segment covering 119–137 (APQNAQTQQPQASTSNNSQ) has biased composition (low complexity). Over residues 138-153 (VTATPTESKSSEGSSV) the composition is skewed to polar residues.

This sequence belongs to the transglycosylase family. SceD subfamily.

It is found in the secreted. In terms of biological role, is able to cleave peptidoglycan and affects clumping and separation of bacterial cells. The polypeptide is Probable transglycosylase SceD (sceD) (Staphylococcus aureus (strain USA300)).